Here is a 715-residue protein sequence, read N- to C-terminus: Polyribonucleotide nucleotidyltransferase (715 aa).

2 residues coordinate Mg(2+): aspartate 493 and aspartate 499. A KH domain is found at 560 to 619 (PRMITIKINPEKIRDVIGKGGSVIRALTEETGTTIDISDDGVVTIASTSSEGMAEAKKRI). The S1 motif domain maps to 629-697 (GQVYEGTVLK…EKGRVRLSAK (69 aa)).

This sequence belongs to the polyribonucleotide nucleotidyltransferase family. Mg(2+) is required as a cofactor.

It localises to the cytoplasm. It carries out the reaction RNA(n+1) + phosphate = RNA(n) + a ribonucleoside 5'-diphosphate. Its function is as follows. Involved in mRNA degradation. Catalyzes the phosphorolysis of single-stranded polyribonucleotides processively in the 3'- to 5'-direction. The chain is Polyribonucleotide nucleotidyltransferase from Burkholderia vietnamiensis (strain G4 / LMG 22486) (Burkholderia cepacia (strain R1808)).